The chain runs to 276 residues: Borealin (276 aa).

A disordered region spans residues 111–158; it reads KEAKSSANSEDENMAPLKSTMKKKKASKKAPSTSKKPRTLSISKQGGT.

The protein belongs to the borealin family. As to quaternary structure, component of the CPC complex.

It localises to the nucleus. Its subcellular location is the chromosome. The protein localises to the centromere. It is found in the cytoplasm. The protein resides in the cytoskeleton. It localises to the spindle. In terms of biological role, component of the chromosomal passenger complex (CPC), a complex that acts as a key regulator of mitosis. The CPC complex has essential functions at the centromere in ensuring correct chromosome alignment and segregation and is required for chromatin-induced microtubule stabilization and spindle assembly. The sequence is that of Borealin (cdca8) from Danio rerio (Zebrafish).